Consider the following 259-residue polypeptide: Ribosomal RNA small subunit methyltransferase A (259 aa).

Asparagine 13, leucine 15, glycine 40, glutamate 61, aspartate 85, and asparagine 103 together coordinate S-adenosyl-L-methionine.

Belongs to the class I-like SAM-binding methyltransferase superfamily. rRNA adenine N(6)-methyltransferase family. RsmA subfamily.

The protein resides in the cytoplasm. The enzyme catalyses adenosine(1518)/adenosine(1519) in 16S rRNA + 4 S-adenosyl-L-methionine = N(6)-dimethyladenosine(1518)/N(6)-dimethyladenosine(1519) in 16S rRNA + 4 S-adenosyl-L-homocysteine + 4 H(+). Its function is as follows. Specifically dimethylates two adjacent adenosines (A1518 and A1519) in the loop of a conserved hairpin near the 3'-end of 16S rRNA in the 30S particle. May play a critical role in biogenesis of 30S subunits. In Neisseria meningitidis serogroup A / serotype 4A (strain DSM 15465 / Z2491), this protein is Ribosomal RNA small subunit methyltransferase A.